A 342-amino-acid chain; its full sequence is Transmembrane protein 268 (342 aa).

Transmembrane regions (helical) follow at residues 106 to 126 (AFAVVFYVLVWANIYSTSQMF) and 133 to 153 (AGVLLATLAAFSLTLTLVLVF). Residues 245–267 (VEGPEDLEDAPLLPSTPGPQERP) are disordered.

In terms of assembly, interacts with ITGAM; this interaction inhibits ITGAM degradation via the endosome-lysosome pathway. Interacts with ITGB4; this interaction prevents ITGB4 degradation.

It is found in the cell membrane. Stabilizes cell surface expression of ITGAM and participates in the adhesion and migration of phagocytes during bacterial clearance. The sequence is that of Transmembrane protein 268 from Mus musculus (Mouse).